The sequence spans 287 residues: MLLKGAPVAERVLNKIKQEISNSSTRPGLAVVLIGNDPASEVYVGMKVKKATDLGMVSKAHRLSSDATLTDILKLIDRLNNDPMIHGILVQIPLPKHLDANAVIQAISPEKDVDGLHPINMGKLLLGQLGGFAPCTPAGIIELLHYYEIPLHGRHVAVVGRSNIVGKPLAAMLMQKHPSTNATVTLLHSQSENLTEILKTADIIIAAVGVPLFIKETMISSHAIVVDVGTSRVAANNDKGYTLVGDVDFNNVVAKCKAVSPVPGGVGPMTVAMLMKNTWESYKKSSS.

Residues 160–162 (GRS), Ser189, and Thr230 each bind NADP(+).

Belongs to the tetrahydrofolate dehydrogenase/cyclohydrolase family. Homodimer.

It carries out the reaction (6R)-5,10-methylene-5,6,7,8-tetrahydrofolate + NADP(+) = (6R)-5,10-methenyltetrahydrofolate + NADPH. The enzyme catalyses (6R)-5,10-methenyltetrahydrofolate + H2O = (6R)-10-formyltetrahydrofolate + H(+). The protein operates within one-carbon metabolism; tetrahydrofolate interconversion. In terms of biological role, catalyzes the oxidation of 5,10-methylenetetrahydrofolate to 5,10-methenyltetrahydrofolate and then the hydrolysis of 5,10-methenyltetrahydrofolate to 10-formyltetrahydrofolate. This is Bifunctional protein FolD from Chlamydia caviae (strain ATCC VR-813 / DSM 19441 / 03DC25 / GPIC) (Chlamydophila caviae).